The following is a 396-amino-acid chain: Elongation factor Tu (396 aa).

The tr-type G domain occupies 10–206 (KPHVNIGTIG…AVDESVPDPV (197 aa)). The interval 19–26 (GHVDHGKT) is G1. Residue 19-26 (GHVDHGKT) participates in GTP binding. Threonine 26 provides a ligand contact to Mg(2+). The tract at residues 62-66 (GITIN) is G2. The G3 stretch occupies residues 83–86 (DAPG). GTP-binding positions include 83-87 (DAPGH) and 138-141 (NKSD). Positions 138–141 (NKSD) are G4. Residues 176 to 178 (SGL) form a G5 region.

This sequence belongs to the TRAFAC class translation factor GTPase superfamily. Classic translation factor GTPase family. EF-Tu/EF-1A subfamily. In terms of assembly, monomer.

The protein resides in the cytoplasm. It catalyses the reaction GTP + H2O = GDP + phosphate + H(+). Its function is as follows. GTP hydrolase that promotes the GTP-dependent binding of aminoacyl-tRNA to the A-site of ribosomes during protein biosynthesis. The polypeptide is Elongation factor Tu (Pseudarthrobacter chlorophenolicus (strain ATCC 700700 / DSM 12829 / CIP 107037 / JCM 12360 / KCTC 9906 / NCIMB 13794 / A6) (Arthrobacter chlorophenolicus)).